The following is a 376-amino-acid chain: MAKRDYYEILGVDRGADKKEIKKAYRRLARKYHPDVSDDPDAAEKFKEISEAYAVLSDDEKRARYDRFGHAGMDGFSQEDIFNNINFEDIFSGLGFDIGNIFDMFGFGGGRRHGPQRGADISYTLDISLEDAYNGLETDIRVPHTKKCPVCHGSRAEPGTGTRTCQTCGGSGQVRQVRNTILGQMMNITTCPDCQGEGTVVEKPCSNCNGKGVVRKTSTIHVKVPAGVETGSRLRVPGEGEMGLRGGEPGDLYVVIKVKPHSIFRREGANLYTEKPISFVQAALGDTVEVPTLDRPVKLRIPAGTQSGTTFRVKGHGMPHLKWNGYGNLYVKVKVVTPRKLSPRQKELLREFASISGDEIHEDKGFFDKVKDAIIH.

One can recognise a J domain in the interval 5 to 69; the sequence is DYYEILGVDR…EKRARYDRFG (65 aa). The segment at 135–217 adopts a CR-type zinc-finger fold; that stretch reads GLETDIRVPH…CNGKGVVRKT (83 aa). Zn(2+) contacts are provided by Cys-148, Cys-151, Cys-165, Cys-168, Cys-191, Cys-194, Cys-205, and Cys-208. 4 CXXCXGXG motif repeats span residues 148–155, 165–172, 191–198, and 205–212; these read CPVCHGSR, CQTCGGSG, CPDCQGEG, and CSNCNGKG.

The protein belongs to the DnaJ family. Homodimer. Zn(2+) serves as cofactor.

The protein resides in the cytoplasm. Functionally, participates actively in the response to hyperosmotic and heat shock by preventing the aggregation of stress-denatured proteins and by disaggregating proteins, also in an autonomous, DnaK-independent fashion. Unfolded proteins bind initially to DnaJ; upon interaction with the DnaJ-bound protein, DnaK hydrolyzes its bound ATP, resulting in the formation of a stable complex. GrpE releases ADP from DnaK; ATP binding to DnaK triggers the release of the substrate protein, thus completing the reaction cycle. Several rounds of ATP-dependent interactions between DnaJ, DnaK and GrpE are required for fully efficient folding. Also involved, together with DnaK and GrpE, in the DNA replication of plasmids through activation of initiation proteins. In Methanothermobacter thermautotrophicus (strain ATCC 29096 / DSM 1053 / JCM 10044 / NBRC 100330 / Delta H) (Methanobacterium thermoautotrophicum), this protein is Chaperone protein DnaJ.